A 245-amino-acid chain; its full sequence is rRNA adenine N-6-methyltransferase (245 aa).

Asn-10, Leu-12, Gly-37, Glu-58, Asp-83, and Ser-100 together coordinate S-adenosyl-L-methionine.

This sequence belongs to the class I-like SAM-binding methyltransferase superfamily. rRNA adenine N(6)-methyltransferase family.

It catalyses the reaction adenosine(2085) in 23S rRNA + 2 S-adenosyl-L-methionine = N(6)-dimethyladenosine(2085) in 23S rRNA + 2 S-adenosyl-L-homocysteine + 2 H(+). Functionally, this protein produces a dimethylation of the adenine residue at position 2085 in 23S rRNA, resulting in reduced affinity between ribosomes and macrolide-lincosamide-streptogramin B antibiotics. In Clostridium perfringens, this protein is rRNA adenine N-6-methyltransferase (ermBP).